Consider the following 518-residue polypeptide: Ent-cassadiene hydroxylase (518 aa).

Residues 6–26 (LILALGLSVLFVLLSKLVSSA) traverse the membrane as a helical segment. Cysteine 451 is a binding site for heme.

It belongs to the cytochrome P450 family. The cofactor is heme.

Its subcellular location is the membrane. It carries out the reaction ent-cassa-12,15-diene + 3 reduced [NADPH--hemoprotein reductase] + 3 O2 = ent-3beta-hydroxycassa-12,15-dien-2-one + 3 oxidized [NADPH--hemoprotein reductase] + 4 H2O + 3 H(+). Enzyme of the diterpenoid metabolism involved in the biosynthesis of antibacterial oryzalides such as phytocassane. Catalyzes the hydroxylation of ent-cassa-12,15-diene to form ent-3beta-hydroxycassa-12,15-dien-2-one. The protein is Ent-cassadiene hydroxylase (CYP71Z7) of Oryza sativa subsp. japonica (Rice).